The chain runs to 173 residues: Photosystem I assembly protein Ycf3 (173 aa).

TPR repeat units follow at residues 35–68 (AYLY…EDNQ), 72–105 (GETL…NPKQ), and 120–153 (GRMA…YPGG).

The protein belongs to the Ycf3 family.

It localises to the cellular thylakoid membrane. Its function is as follows. Essential for the assembly of the photosystem I (PSI) complex. May act as a chaperone-like factor to guide the assembly of the PSI subunits. The protein is Photosystem I assembly protein Ycf3 of Prochlorococcus marinus (strain NATL1A).